Reading from the N-terminus, the 373-residue chain is Histidinol-phosphate aminotransferase (373 aa).

Lys230 is subject to N6-(pyridoxal phosphate)lysine.

This sequence belongs to the class-II pyridoxal-phosphate-dependent aminotransferase family. Histidinol-phosphate aminotransferase subfamily. Homodimer. The cofactor is pyridoxal 5'-phosphate.

It catalyses the reaction L-histidinol phosphate + 2-oxoglutarate = 3-(imidazol-4-yl)-2-oxopropyl phosphate + L-glutamate. Its pathway is amino-acid biosynthesis; L-histidine biosynthesis; L-histidine from 5-phospho-alpha-D-ribose 1-diphosphate: step 7/9. This chain is Histidinol-phosphate aminotransferase, found in Synechococcus elongatus (strain ATCC 33912 / PCC 7942 / FACHB-805) (Anacystis nidulans R2).